The sequence spans 379 residues: Inositol 3-kinase (379 aa).

ATP-binding positions include Ser-217, 267–270, and Asn-294; that span reads GAGD. Asp-270 (proton acceptor) is an active-site residue.

It belongs to the carbohydrate kinase pfkB family.

The enzyme catalyses myo-inositol + ATP = 1D-myo-inositol 3-phosphate + ADP + H(+). In terms of biological role, kinase that phosphorylates myo-inositol to produce multiple myo-inositol monophosphates, Ins(1)P, Ins(3)P, Ins(4)P, Ins(5)P and Ins(6)P. Participates in phytic acid biosynthesis in developing seeds. Phytic acid is the primary storage form of phosphorus in cereal grains and other plant seeds. The sequence is that of Inositol 3-kinase from Zea mays (Maize).